A 357-amino-acid polypeptide reads, in one-letter code: Glycerol-3-phosphate dehydrogenase [NAD(P)+] (357 aa).

NADPH contacts are provided by Ser-12, Trp-13, His-33, and Lys-115. Residues Lys-115, Gly-149, and Ser-151 each contribute to the sn-glycerol 3-phosphate site. Position 153 (Gly-153) interacts with NADPH. The sn-glycerol 3-phosphate site is built by Lys-204, Asp-263, Arg-274, and Asn-275. Lys-204 functions as the Proton acceptor in the catalytic mechanism. Arg-274 lines the NADPH pocket. The NADPH site is built by Leu-307 and Glu-309.

This sequence belongs to the NAD-dependent glycerol-3-phosphate dehydrogenase family.

It localises to the cytoplasm. The catalysed reaction is sn-glycerol 3-phosphate + NAD(+) = dihydroxyacetone phosphate + NADH + H(+). It catalyses the reaction sn-glycerol 3-phosphate + NADP(+) = dihydroxyacetone phosphate + NADPH + H(+). The protein operates within membrane lipid metabolism; glycerophospholipid metabolism. Functionally, catalyzes the reduction of the glycolytic intermediate dihydroxyacetone phosphate (DHAP) to sn-glycerol 3-phosphate (G3P), the key precursor for phospholipid synthesis. The polypeptide is Glycerol-3-phosphate dehydrogenase [NAD(P)+] (Treponema denticola (strain ATCC 35405 / DSM 14222 / CIP 103919 / JCM 8153 / KCTC 15104)).